The sequence spans 519 residues: Exodeoxyribonuclease 7 large subunit (519 aa).

The segment at 500 to 519 (VGRGKTRKPKEEPPAQGSLL) is disordered.

This sequence belongs to the XseA family. As to quaternary structure, heterooligomer composed of large and small subunits.

The protein localises to the cytoplasm. It carries out the reaction Exonucleolytic cleavage in either 5'- to 3'- or 3'- to 5'-direction to yield nucleoside 5'-phosphates.. Its function is as follows. Bidirectionally degrades single-stranded DNA into large acid-insoluble oligonucleotides, which are then degraded further into small acid-soluble oligonucleotides. The sequence is that of Exodeoxyribonuclease 7 large subunit from Cereibacter sphaeroides (strain KD131 / KCTC 12085) (Rhodobacter sphaeroides).